A 128-amino-acid chain; its full sequence is Small ribosomal subunit protein uS11 (128 aa).

It belongs to the universal ribosomal protein uS11 family. Part of the 30S ribosomal subunit. Interacts with proteins S7 and S18. Binds to IF-3.

In terms of biological role, located on the platform of the 30S subunit, it bridges several disparate RNA helices of the 16S rRNA. Forms part of the Shine-Dalgarno cleft in the 70S ribosome. The protein is Small ribosomal subunit protein uS11 of Desulforudis audaxviator (strain MP104C).